The following is a 368-amino-acid chain: Putative F-box/kelch-repeat protein At5g02995 (368 aa).

Residues 35–84 (SLYWNDPTEDCVWNCLARISRFHYPTLSLVSKGFRSLIASPELEATRSFI) enclose the F-box domain. Kelch repeat units lie at residues 140–186 (DIYI…IVDK) and 187–233 (KIYV…VSGG).

This Arabidopsis thaliana (Mouse-ear cress) protein is Putative F-box/kelch-repeat protein At5g02995.